A 2287-amino-acid polypeptide reads, in one-letter code: Protein Ycf2 (2287 aa).

1632-1639 contributes to the ATP binding site; sequence GSIGTGRS.

Belongs to the Ycf2 family.

Its subcellular location is the plastid. It is found in the chloroplast stroma. In terms of biological role, probable ATPase of unknown function. Its presence in a non-photosynthetic plant (Epifagus virginiana) and experiments in tobacco indicate that it has an essential function which is probably not related to photosynthesis. The polypeptide is Protein Ycf2 (Calycanthus floridus var. glaucus (Eastern sweetshrub)).